We begin with the raw amino-acid sequence, 431 residues long: tRNA(Ile)-lysidine synthase (431 aa).

19–24 (STGIDS) is an ATP binding site.

It belongs to the tRNA(Ile)-lysidine synthase family.

Its subcellular location is the cytoplasm. The catalysed reaction is cytidine(34) in tRNA(Ile2) + L-lysine + ATP = lysidine(34) in tRNA(Ile2) + AMP + diphosphate + H(+). Ligates lysine onto the cytidine present at position 34 of the AUA codon-specific tRNA(Ile) that contains the anticodon CAU, in an ATP-dependent manner. Cytidine is converted to lysidine, thus changing the amino acid specificity of the tRNA from methionine to isoleucine. The chain is tRNA(Ile)-lysidine synthase from Staphylococcus aureus (strain Mu50 / ATCC 700699).